Here is a 208-residue protein sequence, read N- to C-terminus: MKIVEVKHPLVKHKLGLMREQDISTKRFRELASEVGSLLTYEATADLETEKVTIEGWNGPVEIDQIKGKKITVVPILRAGLGMMDGVLENVPSARISVVGMYRNEETLEPVPYFQKLVSNIDERMALIVDPMLATGGSVIATIDLLKKAGCSSIKVLVLVAAPEGIAALEKAHPDVELYTASIDQGLNEHGYIIPGLGDAGDKIFGTK.

5-phospho-alpha-D-ribose 1-diphosphate-binding positions include R78, R103, and 130 to 138 (DPMLATGGS). Uracil is bound by residues I193 and 198–200 (GDA). D199 lines the 5-phospho-alpha-D-ribose 1-diphosphate pocket.

This sequence belongs to the UPRTase family. Mg(2+) is required as a cofactor.

It carries out the reaction UMP + diphosphate = 5-phospho-alpha-D-ribose 1-diphosphate + uracil. Its pathway is pyrimidine metabolism; UMP biosynthesis via salvage pathway; UMP from uracil: step 1/1. Its activity is regulated as follows. Allosterically activated by GTP. In terms of biological role, catalyzes the conversion of uracil and 5-phospho-alpha-D-ribose 1-diphosphate (PRPP) to UMP and diphosphate. In Escherichia coli O139:H28 (strain E24377A / ETEC), this protein is Uracil phosphoribosyltransferase.